We begin with the raw amino-acid sequence, 272 residues long: F-actin-capping protein subunit beta (272 aa).

Position 2 is an N-acetylserine (Ser-2). Residue Ser-2 is modified to Phosphoserine. Lys-235 is modified (N6-acetyllysine). Val-263 bears the Phosphoserine mark.

This sequence belongs to the F-actin-capping protein beta subunit family. Component of the F-actin capping complex, composed of a heterodimer of an alpha and a beta subunit. Subunit of dynactin, a multiprotein complex part of a tripartite complex with dynein and a adapter, such as BICDL1, BICD2 or HOOK3. The dynactin complex is built around ACTR1A/ACTB filament and consists of an actin-related filament composed of a shoulder domain, a pointed end and a barbed end. Its length is defined by its flexible shoulder domain. The soulder is composed of 2 DCTN1 subunits, 4 DCTN2 and 2 DCTN3. The 4 DCNT2 (via N-terminus) bind the ACTR1A filament and act as molecular rulers to determine the length. The pointed end is important for binding dynein-dynactin cargo adapters. Consists of 4 subunits: ACTR10, DCNT4, DCTN5 and DCTN6. The barbed end is composed of a CAPZA1:CAPZB heterodimers, which binds ACTR1A/ACTB filament and dynactin and stabilizes dynactin. Interacts with ARHGAP17. Interaction with RCSD1/CAPZIP. Component of the WASH complex, composed of F-actin-capping protein subunit alpha (CAPZA1, CAPZA2 or CAPZA3), F-actin-capping protein subunit beta (CAPZB), WASH (WASHC1, WASH2P, WASH3P, WASH4P, WASH5P or WASH6P), WASHC2 (WASHC2A or WASHC2C), WASHC3, WASHC4 and WASHC5. Interacts with ACTG1. Directly interacts with CRACD; this interaction decreases binding to actin.

The protein localises to the cytoplasm. The protein resides in the cytoskeleton. It localises to the myofibril. It is found in the sarcomere. Functionally, F-actin-capping proteins bind in a Ca(2+)-independent manner to the fast growing ends of actin filaments (barbed end) thereby blocking the exchange of subunits at these ends. Unlike other capping proteins (such as gelsolin and severin), these proteins do not sever actin filaments. Plays a role in the regulation of cell morphology and cytoskeletal organization. Forms, with CAPZB, the barbed end of the fast growing ends of actin filaments in the dynactin complex and stabilizes dynactin structure. The dynactin multiprotein complex activates the molecular motor dynein for ultra-processive transport along microtubules. The chain is F-actin-capping protein subunit beta from Homo sapiens (Human).